The sequence spans 141 residues: Nucleoside diphosphate kinase (141 aa).

ATP is bound by residues Lys-11, Phe-59, Arg-87, Thr-93, Arg-104, and Asn-114. His-117 acts as the Pros-phosphohistidine intermediate in catalysis.

The protein belongs to the NDK family. As to quaternary structure, homotetramer. Mg(2+) serves as cofactor.

It localises to the cytoplasm. It carries out the reaction a 2'-deoxyribonucleoside 5'-diphosphate + ATP = a 2'-deoxyribonucleoside 5'-triphosphate + ADP. The catalysed reaction is a ribonucleoside 5'-diphosphate + ATP = a ribonucleoside 5'-triphosphate + ADP. In terms of biological role, major role in the synthesis of nucleoside triphosphates other than ATP. The ATP gamma phosphate is transferred to the NDP beta phosphate via a ping-pong mechanism, using a phosphorylated active-site intermediate. The polypeptide is Nucleoside diphosphate kinase (Burkholderia cenocepacia (strain HI2424)).